We begin with the raw amino-acid sequence, 126 residues long: uncharacterized protein (126 aa).

The tract at residues 1 to 27 is disordered; that stretch reads MSKSKTPNFDDMEVLDDTNDEYDDSES. Residues 10-27 show a composition bias toward acidic residues; the sequence is DDMEVLDDTNDEYDDSES.

This is an uncharacterized protein from Halorubrum sp. PV6 (HRPV-1).